The sequence spans 683 residues: Synaptic vesicle glycoprotein 2B (683 aa).

The span at 1–10 shows a compositional bias: basic and acidic residues; sequence MDDYRYRDNY. The tract at residues 1 to 73 is disordered; sequence MDDYRYRDNY…TKMAPSRADG (73 aa). Topologically, residues 1-110 are cytoplasmic; sequence MDDYRYRDNY…ECGHGRFQWT (110 aa). Position 33 is a phosphoserine (S33). Phosphothreonine is present on T36. A helical transmembrane segment spans residues 111–131; that stretch reads LFFVLGLALMADGVEIFVVSF. The Extracellular segment spans residues 132–148; sequence ALPSAEKDMCLSSSKKG. A helical membrane pass occupies residues 149–169; sequence MLGLIVYLGMMAGAFILGGLA. Over 170–182 the chain is Cytoplasmic; sequence DKLGRKKVLSMSL. Residues 183–203 traverse the membrane as a helical segment; that stretch reads AINASFASLSSFVQGYGAFLF. Residues 204–205 lie on the Extracellular side of the membrane; the sequence is CR. Residues 206-226 form a helical membrane-spanning segment; sequence LISGIGIGGSLPIVFAYFSEF. The Cytoplasmic portion of the chain corresponds to 227–237; it reads LSREKRGEHLS. A helical membrane pass occupies residues 238 to 258; that stretch reads WLGIFWMTGGIYASAMAWSII. The Extracellular segment spans residues 259 to 277; it reads PHYGWGFSMGTNYHFHSWR. Residues 278-298 form a helical membrane-spanning segment; sequence VFVIVCALPATVSMVALKFMP. Residues 299–390 lie on the Cytoplasmic side of the membrane; it reads ESPRFLLEMG…CVMGPYRMNT (92 aa). A helical membrane pass occupies residues 391–411; that stretch reads LILAVVWFTMALSYYGLTVWF. The Extracellular portion of the chain corresponds to 412 to 535; that stretch reads PDMIRYFQDE…CHMDFEEDND (124 aa). A Phosphotyrosine modification is found at Y423. N-linked (GlcNAc...) asparagine glycosylation is found at N441, N491, and N516. A helical transmembrane segment spans residues 536 to 556; it reads FLIYLVSFLGSLSVLPGNIIS. The Cytoplasmic segment spans residues 557–565; it reads ALLMDRIGR. A helical membrane pass occupies residues 566–586; the sequence is LKMIGGSMLISAVCCFFLFFG. At 587-592 the chain is on the extracellular side; it reads NSESAM. Residues 593 to 613 form a helical membrane-spanning segment; it reads IGWQCLFCGTSIAAWNALDVI. Residues 614–626 lie on the Cytoplasmic side of the membrane; sequence TVELYPTNQRATA. Residues 627 to 649 traverse the membrane as a helical segment; it reads FGILNGLCKFGAILGNTIFASFV. At 650–653 the chain is on the extracellular side; the sequence is GITK. A helical transmembrane segment spans residues 654 to 672; that stretch reads VVPILLAAASLVGGGLIAL. Residues 673–683 are Cytoplasmic-facing; that stretch reads RLPETREQVLM.

It belongs to the major facilitator superfamily. As to quaternary structure, interacts with SYT1 in a calcium-independent manner. Forms a complex with SYT1, syntaxin-1 and SNAP25. In terms of assembly, (Microbial infection) Interacts with C.botulinum neurotoxin type A (BoNT/A, botA). (Microbial infection) Interacts with C.botulinum neurotoxin type D (BoNT/D, botD). No evidence for its interaction with BoNT/D has also been published. N-glycosylated. Post-translationally, the N-terminal cytoplasmic domain is phosphorylated by CK1. Expressed in ribbon synapses of the retina (at protein level). Expressed in diaphragm motor nerve terminals (at protein level). Expressed in hippocampus neurons (at protein level).

Its subcellular location is the cytoplasmic vesicle. The protein resides in the secretory vesicle. The protein localises to the synaptic vesicle membrane. It localises to the acrosome. Probably plays a role in the control of regulated secretion in neural and endocrine cells. In terms of biological role, (Microbial infection) Receptor for C.botulinum neurotoxin type A (BoNT/A, botA); the toxin probably binds via extracellular loop 4. Functionally, (Microbial infection) Possible receptor for C.botulinum neurotoxin type D (BoNT/D, botD). Not a receptor for C.botulinum neurotoxin type D (BoNT/D, botD). Its function is as follows. (Microbial infection) Receptor for C.botulinum neurotoxin type E (BoNT/E); the toxin probably binds via extracellular loop 4. It probably requires glycosylation of Asn-516. This is Synaptic vesicle glycoprotein 2B (Sv2b) from Mus musculus (Mouse).